The chain runs to 380 residues: Cytochrome b (380 aa).

Transmembrane regions (helical) follow at residues 33–53 (FGSL…FLAM), 77–98 (WLIR…YLHV), 113–133 (WNIG…GYVL), and 178–198 (FFAF…IHLL). The heme b site is built by H83 and H97. Residues H182 and H196 each coordinate heme b. H201 provides a ligand contact to a ubiquinone. 4 helical membrane-spanning segments follow: residues 226 to 246 (YKDM…TLFT), 288 to 308 (LGGV…PILH), 320 to 340 (ITQM…WIGG), and 347 to 367 (FMTI…ILIP).

Belongs to the cytochrome b family. The cytochrome bc1 complex contains 3 respiratory subunits (MT-CYB, CYC1 and UQCRFS1), 2 core proteins (UQCRC1 and UQCRC2) and probably 6 low-molecular weight proteins. Heme b is required as a cofactor.

It is found in the mitochondrion inner membrane. Component of the ubiquinol-cytochrome c reductase complex (complex III or cytochrome b-c1 complex) that is part of the mitochondrial respiratory chain. The b-c1 complex mediates electron transfer from ubiquinol to cytochrome c. Contributes to the generation of a proton gradient across the mitochondrial membrane that is then used for ATP synthesis. This Latimeria chalumnae (Coelacanth) protein is Cytochrome b (mt-cyb).